Here is a 34-residue protein sequence, read N- to C-terminus: COP9 signalosome complex subunit 5a (34 aa).

This sequence belongs to the peptidase M67A family. CSN5 subfamily. Component of the CSN complex, probably composed of CSN1, CSN2, CSN3, CSN4, CSN5 (CSN5A or CSN5B), CSN6 (CSN6A or CSN6B), CSN7 and CSN8. The cofactor is a divalent metal cation.

The protein localises to the cytoplasm. It localises to the nucleus. Probable protease subunit of the COP9 signalosome complex (CSN), a complex involved in various cellular and developmental processes such as photomorphogenesis and auxin and jasmonate responses. The CSN complex is an essential regulator of the ubiquitin (Ubl) conjugation pathway by mediating the deneddylation of the cullin subunits of the SCF-type E3 ligase complexes, leading to decrease the Ubl ligase activity of SCF. In the complex, it probably acts as the catalytic center that mediates the cleavage of Nedd8 from cullins. It however has no metalloprotease activity by itself and requires the other subunits of the CSN complex. The CSN complex is involved in repression of photomorphogenesis in darkness by regulating the activity of COP1-containing Ubl ligase complexes. This chain is COP9 signalosome complex subunit 5a (CSN5A), found in Brassica oleracea (Wild cabbage).